The chain runs to 648 residues: MEALLQQSRAMCPFLKRSSPNTLRSLATATRPSTSPGGGTMTNLQRIARRCPVMSKALAVQSARMTGTKRFTSSAAGVPGAGAGTPKPTRGSPGKRALHSTGGNGANMSTEFHKGAQQIHPGLSNATRSHVGASATVSGPTPRAPVAAPFDYDAFYNAELQKKHQDKSYRYFNNINRLAQEFPRAHTASKDEKVTVWCSNDYLGMGRNPEVLATMHKTLDTYGAGAGGTRNISGHNQHAVSLENTLAKLHGKEAALVFSSCFVANDATLATLGSKMPDCVILSDSLNHASMIQGIRHSGAKKMVFKHNDLVDLETKLASLPLHVPKIIAFESVYSMCGSIAPIEAICDLADKYGAITFLDEVHAVGMYGPHGAGVAEHLDYEIYASQDTANPLSTKGTVMDRINIITGTLGKAYGCVGGYIAGSAALVDTIRSLAPGFIFTTSLPPATMAGADTAIRYQARHQQDRILQQLHTRAVKQSFKDLDIPVIPNPSHIVPLLVGDAELAKQASDKLLEEHGIYVQAINYPTVPRGEERLRITPTPGHTQELRDHLVEAVNTVWNDLGIKRASDWKAMGGFVGVGVEAAELENQPIWTDAQLNMRPDETLEAAVEREFQAAVPGMKAGGAKAKPVGSIAANPIGASIPVAAAA.

The transit peptide at 1 to 26 directs the protein to the mitochondrion; sequence MEALLQQSRAMCPFLKRSSPNTLRSL. The disordered stretch occupies residues 69–109; sequence KRFTSSAAGVPGAGAGTPKPTRGSPGKRALHSTGGNGANMS. Positions 170, 283, and 302 each coordinate substrate. Residues Ser-335, His-363, and Thr-409 each contribute to the pyridoxal 5'-phosphate site. Lys-412 is a catalytic residue. Lys-412 carries the post-translational modification N6-(pyridoxal phosphate)lysine. The pyridoxal 5'-phosphate site is built by Thr-441 and Thr-442. Position 527 (Thr-527) interacts with substrate.

This sequence belongs to the class-II pyridoxal-phosphate-dependent aminotransferase family. Homodimer. Pyridoxal 5'-phosphate is required as a cofactor.

It localises to the mitochondrion matrix. The enzyme catalyses succinyl-CoA + glycine + H(+) = 5-aminolevulinate + CO2 + CoA. The protein operates within porphyrin-containing compound metabolism; protoporphyrin-IX biosynthesis; 5-aminolevulinate from glycine: step 1/1. Its function is as follows. Catalyzes the synthesis of 5-aminolevulinate (ALA) from succinyl-CoA and glycine, the first and rate-limiting step in heme biosynthesis. The polypeptide is 5-aminolevulinate synthase, mitochondrial (hemA) (Emericella nidulans (strain FGSC A4 / ATCC 38163 / CBS 112.46 / NRRL 194 / M139) (Aspergillus nidulans)).